The sequence spans 206 residues: Imidazoleglycerol-phosphate dehydratase (206 aa).

The protein belongs to the imidazoleglycerol-phosphate dehydratase family.

It is found in the cytoplasm. The catalysed reaction is D-erythro-1-(imidazol-4-yl)glycerol 3-phosphate = 3-(imidazol-4-yl)-2-oxopropyl phosphate + H2O. It participates in amino-acid biosynthesis; L-histidine biosynthesis; L-histidine from 5-phospho-alpha-D-ribose 1-diphosphate: step 6/9. This is Imidazoleglycerol-phosphate dehydratase from Leptospira interrogans serogroup Icterohaemorrhagiae serovar copenhageni (strain Fiocruz L1-130).